A 160-amino-acid chain; its full sequence is Transcription elongation factor GreA (160 aa).

Residues 2–81 are a coiled coil; it reads AEKKNILTYE…KNAEVVVEDE (80 aa). The segment at 36–55 is disordered; it reads KEAREQGDLSENAEYDAAKD.

The protein belongs to the GreA/GreB family.

Its function is as follows. Necessary for efficient RNA polymerase transcription elongation past template-encoded arresting sites. The arresting sites in DNA have the property of trapping a certain fraction of elongating RNA polymerases that pass through, resulting in locked ternary complexes. Cleavage of the nascent transcript by cleavage factors such as GreA or GreB allows the resumption of elongation from the new 3'terminus. GreA releases sequences of 2 to 3 nucleotides. The protein is Transcription elongation factor GreA of Lachnoclostridium phytofermentans (strain ATCC 700394 / DSM 18823 / ISDg) (Clostridium phytofermentans).